The sequence spans 512 residues: MYAVNPIECIHLKDEYDTCINKSIFDKDLKITKCHACNDESENWICMTCGVVSCSRHVNGHAGEHFENTKHPISASFSDHSFWCYTCDTYVHNTPLFDICEILENIKSSNKKDKIVPKKDQKEEEEEDQVVPSASITTSSTTTSISKQTTVNNTTTTSSSSTTTTTTTTSTTINNNEEEEESESETDESSSEGEESLSLIQRMREMIFGVGRGPKIVAPSEQEESEEDESCVLKKPTIEEIAKYINSAKCKNIIVMTGAGISVAAGIPDFRSPKTGLYEKLDKYDLPYREAIFDIEYFKKNPKPFYVLSKELFPGSFNPTTVHYFIKLLSDKGLLLRNFTQNIDTLERIAGIPANKLVEAHGSFATSHCVSCKKEYSTEYVKERIFKDELPECTETSGCKGIVKPDIVFFGESLPSRFNDCAREDFTKCDLLLVIGTSLKVHPFASLINFAKGCPRVLINFEEVGTNPYGGFKFNQPSNKLDVKCIGDCQTLVLDLIKLLGWENEFNQIVKN.

Residues 7-110 form a UBP-type zinc finger; it reads IECIHLKDEY…EILENIKSSN (104 aa). Positions 9, 11, 34, 37, 46, 49, 54, 61, 65, 71, 84, and 87 each coordinate Zn(2+). The span at 113–122 shows a compositional bias: basic and acidic residues; that stretch reads DKIVPKKDQK. Residues 113–196 are disordered; that stretch reads DKIVPKKDQK…DESSSEGEES (84 aa). Residues 130–175 are compositionally biased toward low complexity; that stretch reads VVPSASITTSSTTTSISKQTTVNNTTTTSSSSTTTTTTTTSTTINN. The span at 176 to 195 shows a compositional bias: acidic residues; that stretch reads NEEEEESESETDESSSEGEE. Residues 231–503 form the Deacetylase sirtuin-type domain; it reads CVLKKPTIEE…LDLIKLLGWE (273 aa). Catalysis depends on H361, which acts as the Proton acceptor. Residues C369, C372, C393, and C399 each coordinate Zn(2+).

Belongs to the sirtuin family. Zn(2+) is required as a cofactor.

The enzyme catalyses N(6)-acetyl-L-lysyl-[protein] + NAD(+) + H2O = 2''-O-acetyl-ADP-D-ribose + nicotinamide + L-lysyl-[protein]. Its function is as follows. NAD-dependent deacetylase, which plays an important role in the regulation of transcriptional repression. The sequence is that of NAD-dependent deacetylase sir2A (sir2A) from Dictyostelium discoideum (Social amoeba).